Here is a 416-residue protein sequence, read N- to C-terminus: Phosphoglycerate kinase (416 aa).

Residues Val23, Asp24, Phe25, Asn26, Gln38, Arg39, Ser62, His63, Gly65, Arg66, Leu121, Arg122, His168, and Arg169 each coordinate (2R)-3-phosphoglycerate. Gly212 is an ADP binding site. Gly212 serves as a coordination point for CDP. AMP is bound by residues Ala213 and Lys214. Ala213 is an ATP binding site. Ala213 contacts Mg(2+). Residue Asp217 participates in CDP binding. Asp217 is a binding site for Mg(2+). Lys218 contributes to the AMP binding site. Lys218 provides a ligand contact to ATP. Gly236 contacts ADP. CDP is bound at residue Gly236. 2 residues coordinate AMP: Gly237 and Gly311. Gly237 and Gly311 together coordinate ATP. CDP is bound by residues Gly336 and Phe341. Phe341 is a binding site for ADP. Glu342 serves as a coordination point for AMP. The ATP site is built by Glu342, Asp373, and Thr374. Asp373 provides a ligand contact to Mg(2+).

This sequence belongs to the phosphoglycerate kinase family. Monomer. Mg(2+) is required as a cofactor.

The protein resides in the cytoplasm. It is found in the mitochondrion. The enzyme catalyses (2R)-3-phosphoglycerate + ATP = (2R)-3-phospho-glyceroyl phosphate + ADP. The protein operates within carbohydrate degradation; glycolysis; pyruvate from D-glyceraldehyde 3-phosphate: step 2/5. In terms of biological role, catalyzes one of the two ATP producing reactions in the glycolytic pathway via the reversible conversion of 1,3-diphosphoglycerate to 3-phosphoglycerate. Both L- and D- forms of purine and pyrimidine nucleotides can be used as substrates, but the activity is much lower on pyrimidines. Negatively regulates the biosynthesis of acetyl-CoA from pyruvate in the mitochondrion. This Komagataella pastoris (Yeast) protein is Phosphoglycerate kinase (PGK1).